The primary structure comprises 299 residues: Acetylglutamate kinase (299 aa).

Residues 64 to 65, R86, and N197 each bind substrate; that span reads GG.

Belongs to the acetylglutamate kinase family. ArgB subfamily.

It is found in the cytoplasm. It catalyses the reaction N-acetyl-L-glutamate + ATP = N-acetyl-L-glutamyl 5-phosphate + ADP. Its pathway is amino-acid biosynthesis; L-arginine biosynthesis; N(2)-acetyl-L-ornithine from L-glutamate: step 2/4. Its function is as follows. Catalyzes the ATP-dependent phosphorylation of N-acetyl-L-glutamate. In Sulfurihydrogenibium sp. (strain YO3AOP1), this protein is Acetylglutamate kinase.